A 492-amino-acid polypeptide reads, in one-letter code: 5-taurinomethyluridine-[tRNA] synthase subunit GTPB3, mitochondrial (492 aa).

A mitochondrion-targeting transit peptide spans 1–20 (MWRGLSALVTQAAWAPLRLC). Residues arginine 52, glutamate 112, and lysine 152 each contribute to the 5,10-methylenetetrahydrofolate site. Positions 249–416 (GANVVVTGPP…LLQALKTELA (168 aa)) constitute a TrmE-type G domain. GTP-binding positions include 256–263 (GPPNAGKS), 282–286 (GTTRD), 303–306 (DTAG), and 374–377 (NKSD). Asparagine 259 is a binding site for K(+). Serine 263 and threonine 284 together coordinate Mg(2+). Lysine 492 provides a ligand contact to 5,10-methylenetetrahydrofolate.

It belongs to the TRAFAC class TrmE-Era-EngA-EngB-Septin-like GTPase superfamily. TrmE GTPase family. Homodimer; forms a dimer in the presence of potassium. Interacts with MTO1; forms the GTPBP3-MTO1 complex composed of homodimers of GTPBP3 and MTO1. It depends on K(+) as a cofactor. In terms of tissue distribution, ubiquitously expressed. Highly expressed in tissues with high metabolic rates including heart, liver and brain. Weakly expressed in skeletal muscle.

The protein resides in the mitochondrion. It catalyses the reaction GTP + H2O = GDP + phosphate + H(+). Functionally, GTPase component of the GTPBP3-MTO1 complex that catalyzes the 5-taurinomethyluridine (taum(5)U) modification at the 34th wobble position (U34) of mitochondrial tRNAs (mt-tRNAs), which plays a role in mt-tRNA decoding and mitochondrial translation. Taum(5)U formation on mammalian mt-tRNA requires the presence of both GTPBP3-mediated GTPase activity and MTO1 catalytic activity. In Mus musculus (Mouse), this protein is 5-taurinomethyluridine-[tRNA] synthase subunit GTPB3, mitochondrial.